The primary structure comprises 924 residues: 104 kDa microneme/rhoptry antigen (924 aa).

Positions 1 to 19 (MKFLILLFNILCLFPVLAA) are cleaved as a signal peptide. The disordered stretch occupies residues 490–907 (SKKKLAPITE…KKPKKPDSAY (418 aa)). Composition is skewed to basic and acidic residues over residues 522 to 532 (PGDKEGSEGHK) and 573 to 588 (GPKD…EPRK). Residues 592 to 617 (PRTASPTRRPSPKLPQLSKLPKSTSP) are compositionally biased toward low complexity. Residues 653 to 673 (SFKEKFYDDYSKAASRSKETK) are compositionally biased toward basic and acidic residues. Residues 724–736 (SPSTSPSEFFTPP) show a composition bias toward low complexity. Basic and acidic residues-rich tracts occupy residues 737–747 (ESKRTRFHETP), 770–783 (KSPD…RSPS), and 816–825 (DPGRMAKDAS). Acidic residues predominate over residues 857-867 (DDEGTEADDEE). The span at 868-878 (THPPEERQKTE) shows a compositional bias: basic and acidic residues. Residues 879–901 (VRRRRPPKKPSKSPRPSKPKKPK) are compositionally biased toward basic residues. The GPI-anchor amidated aspartate moiety is linked to residue Asp904. Residues 905 to 924 (SAYIPSILAILVVSLIVGIL) constitute a propeptide, removed in mature form.

It is found in the cell membrane. This Theileria parva (East coast fever infection agent) protein is 104 kDa microneme/rhoptry antigen.